Reading from the N-terminus, the 621-residue chain is Chaperone protein HscA homolog (621 aa).

Belongs to the heat shock protein 70 family.

Functionally, chaperone involved in the maturation of iron-sulfur cluster-containing proteins. Has a low intrinsic ATPase activity which is markedly stimulated by HscB. This Cupriavidus metallidurans (strain ATCC 43123 / DSM 2839 / NBRC 102507 / CH34) (Ralstonia metallidurans) protein is Chaperone protein HscA homolog.